Consider the following 142-residue polypeptide: Large ribosomal subunit protein mL42 (142 aa).

Residues 1 to 32 (MALAAVKWAISSRTMLKHLFPVENGALYCVGH) constitute a mitochondrion transit peptide.

Belongs to the mitochondrion-specific ribosomal protein mL42 family. Component of the mitochondrial ribosome large subunit (39S) which comprises a 16S rRNA and about 50 distinct proteins. Component of the mitochondrial ribosome small subunit (28S) which comprises a 12S rRNA and about 30 distinct proteins.

Its subcellular location is the mitochondrion. In Bos taurus (Bovine), this protein is Large ribosomal subunit protein mL42 (MRPL42).